Consider the following 348-residue polypeptide: MSEKMVAIMKTKPAYGAELVEVDVPKPGPGEVLIKVIATSICGTDLHIYEWNEWAQSRIKPPQIMGHEVAGEVVEVGPGVEGIEVGDYVSVETHIVCGKCYACRRGQYHVCQNTKIFGVDTDGVFAEYAVVPAQNVWKNPKSIPPEYATLQEPLGNAVDTVLAGPISGKSVLITGAGPLGLLGIAVAKASGAYPVIVSEPSDFRRELAKKVGADYVINPFEEDVVKEVMDITDGNGVDVFLEFSGAPKALEQGLQAVTPAGRVSLLGLYPGKVSIDFNNLIIFKALTVYGITGRHLWETWYTVSRLLQSGKLNLDPIITHKYKGFDKYEEAFELMRAGKTGKVVFMLK.

Cys42 is a Zn(2+) binding site. Catalysis depends on charge relay system residues Thr44 and His47. Zn(2+) contacts are provided by His67, Glu68, Cys97, Cys100, Cys103, and Cys111. NAD(+) is bound by residues Leu179, Glu199, Arg204, 266–268, and 291–292; these read LGL and IT.

Belongs to the zinc-containing alcohol dehydrogenase family. In terms of assembly, homotetramer. It depends on Zn(2+) as a cofactor.

It localises to the cytoplasm. The catalysed reaction is L-threonine + NAD(+) = (2S)-2-amino-3-oxobutanoate + NADH + H(+). It functions in the pathway amino-acid degradation; L-threonine degradation via oxydo-reductase pathway; glycine from L-threonine: step 1/2. In terms of biological role, catalyzes the NAD(+)-dependent oxidation of L-threonine to 2-amino-3-ketobutyrate. The sequence is that of L-threonine 3-dehydrogenase from Pyrococcus abyssi (strain GE5 / Orsay).